The sequence spans 387 residues: S-adenosylmethionine synthase (387 aa).

Residue His-16 participates in ATP binding. Asp-18 is a binding site for Mg(2+). Position 44 (Glu-44) interacts with K(+). Glu-57 and Gln-100 together coordinate L-methionine. A flexible loop region spans residues 100 to 110 (QSPDIAQGVDR). Residues 167 to 169 (DAK), 232 to 233 (RF), Asp-241, 247 to 248 (RK), Ala-264, and Lys-268 contribute to the ATP site. Asp-241 contacts L-methionine. Residue Lys-272 participates in L-methionine binding.

The protein belongs to the AdoMet synthase family. As to quaternary structure, homotetramer; dimer of dimers. The cofactor is Mg(2+). K(+) is required as a cofactor.

It is found in the cytoplasm. It carries out the reaction L-methionine + ATP + H2O = S-adenosyl-L-methionine + phosphate + diphosphate. The protein operates within amino-acid biosynthesis; S-adenosyl-L-methionine biosynthesis; S-adenosyl-L-methionine from L-methionine: step 1/1. Its function is as follows. Catalyzes the formation of S-adenosylmethionine (AdoMet) from methionine and ATP. The overall synthetic reaction is composed of two sequential steps, AdoMet formation and the subsequent tripolyphosphate hydrolysis which occurs prior to release of AdoMet from the enzyme. This Cupriavidus metallidurans (strain ATCC 43123 / DSM 2839 / NBRC 102507 / CH34) (Ralstonia metallidurans) protein is S-adenosylmethionine synthase.